Here is a 346-residue protein sequence, read N- to C-terminus: Phospholipase A1 (346 aa).

The first 26 residues, methionine 1–alanine 26, serve as a signal peptide directing secretion. The propeptide occupies glutamate 27–lysine 37. N-linked (GlcNAc...) asparagine glycans are attached at residues asparagine 44 and asparagine 72. Serine 167 acts as the Nucleophile in catalysis. The N-linked (GlcNAc...) asparagine glycan is linked to asparagine 185. Active-site charge relay system residues include aspartate 195 and histidine 258.

The protein belongs to the AB hydrolase superfamily. Lipase family. Post-translationally, contains six disulfide bonds. N-glycosylated; contains mannose. In terms of tissue distribution, expressed by the venom gland.

The protein resides in the secreted. The enzyme catalyses a 1,2-diacyl-sn-glycero-3-phosphocholine + H2O = a 2-acyl-sn-glycero-3-phosphocholine + a fatty acid + H(+). In terms of biological role, catalyzes the hydrolysis of phosphatidylcholine with phospholipase A1 activity. Induces hemolytic activity. Acts as an allergen. The protein is Phospholipase A1 of Solenopsis invicta (Red imported fire ant).